The primary structure comprises 399 residues: Tryptophan synthase beta chain (399 aa).

The residue at position 92 (Lys-92) is an N6-(pyridoxal phosphate)lysine.

The protein belongs to the TrpB family. As to quaternary structure, tetramer of two alpha and two beta chains. Pyridoxal 5'-phosphate serves as cofactor.

The catalysed reaction is (1S,2R)-1-C-(indol-3-yl)glycerol 3-phosphate + L-serine = D-glyceraldehyde 3-phosphate + L-tryptophan + H2O. It participates in amino-acid biosynthesis; L-tryptophan biosynthesis; L-tryptophan from chorismate: step 5/5. In terms of biological role, the beta subunit is responsible for the synthesis of L-tryptophan from indole and L-serine. In Nitrosomonas eutropha (strain DSM 101675 / C91 / Nm57), this protein is Tryptophan synthase beta chain.